Consider the following 222-residue polypeptide: MIF4G domain-containing protein (222 aa).

The MIF4G domain occupies E3–G205.

It belongs to the MIF4GD family. As to quaternary structure, interacts with EIF4G1, EIF4G2 and SLBP; probably tethered by SLBP to the 3'-end of mRNAs ending with the histone stem-loop, it also interacts with EIF4G1 which is bound to their 5'-end.

Its subcellular location is the cytoplasm. It localises to the nucleus. Its function is as follows. Functions in replication-dependent translation of histone mRNAs which differ from other eukaryotic mRNAs in that they do not end with a poly-A tail but a stem-loop. May participate in circularizing those mRNAs specifically enhancing their translation. This chain is MIF4G domain-containing protein (MIF4GD), found in Homo sapiens (Human).